The sequence spans 528 residues: UDP-glucuronosyltransferase 2B10 (528 aa).

An N-terminal signal peptide occupies residues 1–23 (MALKWTTVLLIQLSFYFSSGSCG). Asn-66 is a glycosylation site (N-linked (GlcNAc...) asparagine). Lys-134 carries the N6-succinyllysine modification. N-linked (GlcNAc...) asparagine glycans are attached at residues Asn-314 and Asn-481. The chain crosses the membrane as a helical span at residues 492–512 (VIGFLLACVATVLFIITKCCL).

The protein belongs to the UDP-glycosyltransferase family.

It localises to the microsome membrane. The protein resides in the endoplasmic reticulum membrane. The enzyme catalyses glucuronate acceptor + UDP-alpha-D-glucuronate = acceptor beta-D-glucuronoside + UDP + H(+). In terms of biological role, UDPGT is of major importance in the conjugation and subsequent elimination of potentially toxic xenobiotics and endogenous compounds. The sequence is that of UDP-glucuronosyltransferase 2B10 (UGT2B10) from Homo sapiens (Human).